A 355-amino-acid chain; its full sequence is Mu-like prophage FluMu protein gp47 (355 aa).

This sequence belongs to the Mu gp47/PBSX XkdT family.

The protein is Mu-like prophage FluMu protein gp47 of Haemophilus influenzae (strain ATCC 51907 / DSM 11121 / KW20 / Rd).